We begin with the raw amino-acid sequence, 530 residues long: Estrogen receptor beta (530 aa).

The modulating stretch occupies residues 1-148; it reads MEIKNSPSSL…SPNAKRDAHF (148 aa). Serine 61 carries the phosphoserine; alternate modification. Serine 61 is a glycosylation site (O-linked (GlcNAc) serine; alternate). A phosphoserine; by MAPK mark is found at serine 87 and serine 105. 2 consecutive NR C4-type zinc fingers follow at residues 149 to 169 and 185 to 209; these read CPVC…CEGC and CPAT…LRKC. A DNA-binding region (nuclear receptor) is located at residues 149–214; it reads CPVCSDYASG…RLRKCYEVGM (66 aa). Residues 264-498 enclose the NR LBD domain; the sequence is SPEQLVLTLL…DLLLEMLNAH (235 aa). Residues 506 to 515 are compositionally biased toward low complexity; it reads SISGSECSST. A disordered region spans residues 506 to 530; it reads SISGSECSSTEDSKNKESSQNLQSQ.

This sequence belongs to the nuclear hormone receptor family. NR3 subfamily. As to quaternary structure, binds DNA as a homodimer. Can form a heterodimer with ESR1. Interacts with NCOA1, NCOA3, NCOA5 and NCOA6 coactivators, leading to a strong increase of transcription of target genes. Interacts with UBE1C and AKAP13. Interacts with DNTTIP2. Interacts with CCDC62 in the presence of estradiol/E2; this interaction seems to enhance the transcription of target genes. Interacts with PRMT2. Interacts with CCAR2 (via N-terminus) in a ligand-independent manner. Interacts with DNAAF4. Interacts with RBM39, in the presence of estradiol (E2). Interacts with STUB1/CHIP. Post-translationally, phosphorylation at Ser-87 and Ser-105 recruits NCOA1. In terms of tissue distribution, expressed in the CA1 region of the hippocampus, expression decreases with age (at protein level). Expressed in prostate, ovary, lung, liver, kidney, fat, bone, brain, uterus and testis.

It localises to the nucleus. Nuclear hormone receptor. Binds estrogens with an affinity similar to that of ESR1/ER-alpha, and activates expression of reporter genes containing estrogen response elements (ERE) in an estrogen-dependent manner. Its function is as follows. Lacks ligand binding affinity and suppresses ESR1/ER-alpha and ESR2 isoform 1/ER-beta1 mediated transcriptional activation and may act as a dominant negative regulator of estrogen action. Functionally, unable to bind DNA and activate transcription due to the truncation of the DNA binding domain. In Rattus norvegicus (Rat), this protein is Estrogen receptor beta (Esr2).